A 211-amino-acid chain; its full sequence is Ribonuclease HII (211 aa).

An RNase H type-2 domain is found at Met1 to Gln205. Positions 6, 7, and 100 each coordinate a divalent metal cation.

The protein belongs to the RNase HII family. Mn(2+) serves as cofactor. It depends on Mg(2+) as a cofactor.

It is found in the cytoplasm. It catalyses the reaction Endonucleolytic cleavage to 5'-phosphomonoester.. Its function is as follows. Endonuclease that specifically degrades the RNA of RNA-DNA hybrids. This is Ribonuclease HII from Haloarcula marismortui (strain ATCC 43049 / DSM 3752 / JCM 8966 / VKM B-1809) (Halobacterium marismortui).